A 20-amino-acid chain; its full sequence is Dahlein-5.1 (20 aa).

As to expression, expressed by the skin dorsal glands.

It localises to the secreted. Has no antimicrobial activity. Strongly inhibits the formation of NO by neuronal nitric oxide synthase at micromolar concentrations. Acts by a non-competitive mechanism, probably by binding to calcium/calmodulin and as a consequence blocking calmodulin attachment to nNOS. The polypeptide is Dahlein-5.1 (Ranoidea dahlii (Dahl's aquatic frog)).